The chain runs to 161 residues: Nucleotide-binding protein lpg1167 (161 aa).

Belongs to the YajQ family.

Nucleotide-binding protein. In Legionella pneumophila subsp. pneumophila (strain Philadelphia 1 / ATCC 33152 / DSM 7513), this protein is Nucleotide-binding protein lpg1167.